The sequence spans 149 residues: Squidulin (149 aa).

Residue Ala-1 is modified to N-acetylalanine. 4 consecutive EF-hand domains span residues 7–42 (KQIA…LGRT), 43–78 (PSDA…QMGP), 80–115 (DPEK…FSDE), and 117–149 (LTSE…MTPK). Residues Asp-20, Asp-22, Asp-24, Gln-26, Glu-31, Asp-56, Asp-58, Asn-60, Thr-62, Glu-67, Asp-93, Asp-95, Asn-97, Glu-104, Asp-130, Asp-132, Asp-134, Met-136, and Glu-141 each contribute to the Ca(2+) site.

The protein belongs to the calmodulin family.

Functionally, not known. This protein has four functional calcium-binding sites. This Doryteuthis pealeii (Longfin inshore squid) protein is Squidulin.